A 509-amino-acid chain; its full sequence is tRNA-2-methylthio-N(6)-dimethylallyladenosine synthase (509 aa).

The span at 1-15 (MNEQQRLASQQVNSS) shows a compositional bias: polar residues. Residues 1-26 (MNEQQRLASQQVNSSTKKEEKDYSKY) are disordered. A compositionally biased stretch (basic and acidic residues) spans 16–25 (TKKEEKDYSK). The region spanning 66–184 (RKFYIRTYGC…LPYILKDAMF (119 aa)) is the MTTase N-terminal domain. [4Fe-4S] cluster-binding residues include Cys-75, Cys-111, Cys-145, Cys-221, Cys-225, and Cys-228. Residues 207 to 437 (RRGDIKAWVN…NALVNKLAIE (231 aa)) form the Radical SAM core domain. The TRAM domain maps to 440 to 503 (DRYKGQIVEV…TWSLNGELVE (64 aa)).

This sequence belongs to the methylthiotransferase family. MiaB subfamily. As to quaternary structure, monomer. Requires [4Fe-4S] cluster as cofactor.

Its subcellular location is the cytoplasm. It catalyses the reaction N(6)-dimethylallyladenosine(37) in tRNA + (sulfur carrier)-SH + AH2 + 2 S-adenosyl-L-methionine = 2-methylsulfanyl-N(6)-dimethylallyladenosine(37) in tRNA + (sulfur carrier)-H + 5'-deoxyadenosine + L-methionine + A + S-adenosyl-L-homocysteine + 2 H(+). Functionally, catalyzes the methylthiolation of N6-(dimethylallyl)adenosine (i(6)A), leading to the formation of 2-methylthio-N6-(dimethylallyl)adenosine (ms(2)i(6)A) at position 37 in tRNAs that read codons beginning with uridine. This is tRNA-2-methylthio-N(6)-dimethylallyladenosine synthase from Bacillus cereus (strain ZK / E33L).